A 96-amino-acid chain; its full sequence is Aspartyl/glutamyl-tRNA(Asn/Gln) amidotransferase subunit C (96 aa).

This sequence belongs to the GatC family. Heterotrimer of A, B and C subunits.

It catalyses the reaction L-glutamyl-tRNA(Gln) + L-glutamine + ATP + H2O = L-glutaminyl-tRNA(Gln) + L-glutamate + ADP + phosphate + H(+). The enzyme catalyses L-aspartyl-tRNA(Asn) + L-glutamine + ATP + H2O = L-asparaginyl-tRNA(Asn) + L-glutamate + ADP + phosphate + 2 H(+). Its function is as follows. Allows the formation of correctly charged Asn-tRNA(Asn) or Gln-tRNA(Gln) through the transamidation of misacylated Asp-tRNA(Asn) or Glu-tRNA(Gln) in organisms which lack either or both of asparaginyl-tRNA or glutaminyl-tRNA synthetases. The reaction takes place in the presence of glutamine and ATP through an activated phospho-Asp-tRNA(Asn) or phospho-Glu-tRNA(Gln). This chain is Aspartyl/glutamyl-tRNA(Asn/Gln) amidotransferase subunit C, found in Wolinella succinogenes (strain ATCC 29543 / DSM 1740 / CCUG 13145 / JCM 31913 / LMG 7466 / NCTC 11488 / FDC 602W) (Vibrio succinogenes).